A 304-amino-acid chain; its full sequence is MNQYMEFYKLLGEFYNEEDITVDSPMSEHIYFRVGGPADILVTPVNEEQVVNTLKLCREYNVPYFILGNGSNILVKDGGISGVVIKFNKLNKITTEGNCVTAQSGALLKDVSKAALENNLRGFEFACGIPGSIGGAVFMNAGAYDGEMAHVIKSARVIDENCNIKNLTKEELELGYRSSIVMKKGYVVIEATVELESGEYASIKDKIDDLTNRRESKQPLEYPSAGSTFKRPEGYFAGKLIQDSGLKGFSIGGAAVSEKHSGFVINKGGATAKDVLDVIAHVQKTVKENFDVELHTEVRIIGRD.

Residues 33-198 form the FAD-binding PCMH-type domain; the sequence is RVGGPADILV…IEATVELESG (166 aa). Arg177 is a catalytic residue. Ser227 acts as the Proton donor in catalysis. Glu297 is a catalytic residue.

Belongs to the MurB family. It depends on FAD as a cofactor.

The protein localises to the cytoplasm. The catalysed reaction is UDP-N-acetyl-alpha-D-muramate + NADP(+) = UDP-N-acetyl-3-O-(1-carboxyvinyl)-alpha-D-glucosamine + NADPH + H(+). It functions in the pathway cell wall biogenesis; peptidoglycan biosynthesis. In terms of biological role, cell wall formation. In Clostridium perfringens (strain ATCC 13124 / DSM 756 / JCM 1290 / NCIMB 6125 / NCTC 8237 / Type A), this protein is UDP-N-acetylenolpyruvoylglucosamine reductase.